The chain runs to 209 residues: Kynurenine formamidase (209 aa).

F18 lines the substrate pocket. The Zn(2+) site is built by H48, H52, and D54. H58 acts as the Proton donor/acceptor in catalysis. Residues H160 and E172 each contribute to the Zn(2+) site.

Belongs to the Cyclase 1 superfamily. KynB family. In terms of assembly, homodimer. The cofactor is Zn(2+).

It catalyses the reaction N-formyl-L-kynurenine + H2O = L-kynurenine + formate + H(+). It functions in the pathway amino-acid degradation; L-tryptophan degradation via kynurenine pathway; L-kynurenine from L-tryptophan: step 2/2. Functionally, catalyzes the hydrolysis of N-formyl-L-kynurenine to L-kynurenine, the second step in the kynurenine pathway of tryptophan degradation. In Bordetella bronchiseptica (strain ATCC BAA-588 / NCTC 13252 / RB50) (Alcaligenes bronchisepticus), this protein is Kynurenine formamidase.